The following is a 308-amino-acid chain: Probable inositol oxygenase (308 aa).

Substrate-binding positions include arginine 49 and 106-108 (DDS). Fe cation contacts are provided by histidine 119, histidine 144, and aspartate 145. Substrate-binding positions include lysine 148 and 165 to 166 (GD). The Fe cation site is built by histidine 217, histidine 243, and aspartate 276. Residue 243–244 (HS) participates in substrate binding.

Belongs to the myo-inositol oxygenase family. The cofactor is Fe cation.

Its subcellular location is the cytoplasm. The enzyme catalyses myo-inositol + O2 = D-glucuronate + H2O + H(+). It participates in polyol metabolism; myo-inositol degradation into D-glucuronate; D-glucuronate from myo-inositol: step 1/1. Its function is as follows. Involved in the biosynthesis of UDP-glucuronic acid (UDP-GlcA), providing nucleotide sugars for cell-wall polymers. May be also involved in plant ascorbate biosynthesis. The polypeptide is Probable inositol oxygenase (Oryza sativa subsp. japonica (Rice)).